Consider the following 117-residue polypeptide: Holo-[acyl-carrier-protein] synthase (117 aa).

Residues Asp8 and Glu55 each coordinate Mg(2+).

This sequence belongs to the P-Pant transferase superfamily. AcpS family. Mg(2+) is required as a cofactor.

Its subcellular location is the cytoplasm. The enzyme catalyses apo-[ACP] + CoA = holo-[ACP] + adenosine 3',5'-bisphosphate + H(+). Transfers the 4'-phosphopantetheine moiety from coenzyme A to a Ser of acyl-carrier-protein. The sequence is that of Holo-[acyl-carrier-protein] synthase from Finegoldia magna (strain ATCC 29328 / DSM 20472 / WAL 2508) (Peptostreptococcus magnus).